A 500-amino-acid chain; its full sequence is NAD(P)H-quinone oxidoreductase subunit 2 B, chloroplastic (500 aa).

13 helical membrane passes run 14 to 34 (SILP…IDLT), 41 to 61 (WLYF…LFQL), 78 to 98 (FNGI…PLSM), 116 to 136 (LTAT…IIFI), 166 to 186 (LLMG…LYGL), 211 to 231 (ISIV…LVPF), 242 to 262 (APTS…LALA), 277 to 297 (WHLI…FIAI), 305 to 325 (MLAY…IAGD), 335 to 355 (YMLF…LFGL), 376 to 396 (ASFL…AGFF), 409 to 429 (GLYL…YYYL), and 467 to 487 (IIIC…VIAI).

The protein belongs to the complex I subunit 2 family. As to quaternary structure, NDH is composed of at least 16 different subunits, 5 of which are encoded in the nucleus.

It localises to the plastid. Its subcellular location is the chloroplast thylakoid membrane. The catalysed reaction is a plastoquinone + NADH + (n+1) H(+)(in) = a plastoquinol + NAD(+) + n H(+)(out). The enzyme catalyses a plastoquinone + NADPH + (n+1) H(+)(in) = a plastoquinol + NADP(+) + n H(+)(out). In terms of biological role, NDH shuttles electrons from NAD(P)H:plastoquinone, via FMN and iron-sulfur (Fe-S) centers, to quinones in the photosynthetic chain and possibly in a chloroplast respiratory chain. The immediate electron acceptor for the enzyme in this species is believed to be plastoquinone. Couples the redox reaction to proton translocation, and thus conserves the redox energy in a proton gradient. This chain is NAD(P)H-quinone oxidoreductase subunit 2 B, chloroplastic, found in Anthoceros angustus (Hornwort).